A 180-amino-acid chain; its full sequence is Immediate early response gene 2 protein (180 aa).

The tract at residues 53–135 (MSEKSGQSVT…KRRSKTATDS (83 aa)) is disordered. A compositionally biased stretch (polar residues) spans 56–92 (KSGQSVTEECTSHTQEPMDTSSSTATPLRETSGQSSE). Residues 93-103 (DGQRSGLEGHP) show a composition bias toward basic and acidic residues.

Belongs to the IER family. Interacts with FIBPB.

The protein localises to the nucleus. It localises to the cytoplasm. DNA-binding protein that seems to act as a transcription factor. Mediates with FIBPB FGF-signaling in Kupffer's vesicle ciliogenesis and in the establishment of laterality in the embryo. This Danio rerio (Zebrafish) protein is Immediate early response gene 2 protein.